Consider the following 921-residue polypeptide: Isoleucine--tRNA ligase (921 aa).

Positions 59–69 (PYANGHLHIGH) match the 'HIGH' region motif. Glu569 serves as a coordination point for L-isoleucyl-5'-AMP. A 'KMSKS' region motif is present at residues 610-614 (KMSKS). Residue Lys613 coordinates ATP. Zn(2+) is bound by residues Cys896, Cys899, Cys911, and Cys914.

This sequence belongs to the class-I aminoacyl-tRNA synthetase family. IleS type 1 subfamily. In terms of assembly, monomer. Requires Zn(2+) as cofactor.

The protein localises to the cytoplasm. It catalyses the reaction tRNA(Ile) + L-isoleucine + ATP = L-isoleucyl-tRNA(Ile) + AMP + diphosphate. Its function is as follows. Catalyzes the attachment of isoleucine to tRNA(Ile). As IleRS can inadvertently accommodate and process structurally similar amino acids such as valine, to avoid such errors it has two additional distinct tRNA(Ile)-dependent editing activities. One activity is designated as 'pretransfer' editing and involves the hydrolysis of activated Val-AMP. The other activity is designated 'posttransfer' editing and involves deacylation of mischarged Val-tRNA(Ile). This chain is Isoleucine--tRNA ligase, found in Campylobacter hominis (strain ATCC BAA-381 / DSM 21671 / CCUG 45161 / LMG 19568 / NCTC 13146 / CH001A).